The following is a 451-amino-acid chain: Cindoxin reductase (451 aa).

FAD-binding residues include alanine 24, glutamate 45, leucine 53, and valine 89. Residues 157 to 160 (NGNV) and 197 to 198 (RS) each bind NADP(+). Residues tryptophan 338 and 345–347 (GGI) contribute to the FAD site. Glycine 345 is an NADP(+) binding site.

The protein belongs to the ferredoxin--NADP reductase type 1 family. Requires FAD as cofactor.

In terms of biological role, involved in the degradation of cineol (eucalyptol). Catalyzes the reduction of cindoxin (CinC). The polypeptide is Cindoxin reductase (cinB) (Citrobacter braakii).